The chain runs to 98 residues: Integration host factor subunit alpha (98 aa).

The segment at 49–70 (FGNFDLRDKNQRPGRNPKTGED) is disordered.

It belongs to the bacterial histone-like protein family. In terms of assembly, heterodimer of an alpha and a beta chain.

Its function is as follows. This protein is one of the two subunits of integration host factor, a specific DNA-binding protein that functions in genetic recombination as well as in transcriptional and translational control. This is Integration host factor subunit alpha from Serratia proteamaculans (strain 568).